The sequence spans 155 residues: Interleukin-2 (155 aa).

Residues 1–20 (MYKMQLLSCIALMLVLVANS) form the signal peptide. Residue threonine 24 is glycosylated (O-linked (GalNAc...) threonine). Cysteine 79 and cysteine 127 are oxidised to a cystine. N-linked (GlcNAc...) asparagine glycosylation occurs at asparagine 112.

It belongs to the IL-2 family.

The protein localises to the secreted. Cytokine produced by activated CD4-positive helper T-cells and to a lesser extend activated CD8-positive T-cells and natural killer (NK) cells that plays pivotal roles in the immune response and tolerance. Binds to a receptor complex composed of either the high-affinity trimeric IL-2R (IL2RA/CD25, IL2RB/CD122 and IL2RG/CD132) or the low-affinity dimeric IL-2R (IL2RB and IL2RG). Interaction with the receptor leads to oligomerization and conformation changes in the IL-2R subunits resulting in downstream signaling starting with phosphorylation of JAK1 and JAK3. In turn, JAK1 and JAK3 phosphorylate the receptor to form a docking site leading to the phosphorylation of several substrates including STAT5. This process leads to activation of several pathways including STAT, phosphoinositide-3-kinase/PI3K and mitogen-activated protein kinase/MAPK pathways. Functions as a T-cell growth factor and can increase NK-cell cytolytic activity as well. Promotes strong proliferation of activated B-cells and subsequently immunoglobulin production. Plays a pivotal role in regulating the adaptive immune system by controlling the survival and proliferation of regulatory T-cells, which are required for the maintenance of immune tolerance. Moreover, participates in the differentiation and homeostasis of effector T-cell subsets, including Th1, Th2, Th17 as well as memory CD8-positive T-cells. The protein is Interleukin-2 (IL2) of Vulpes vulpes (Red fox).